The following is a 108-amino-acid chain: PTS system fructose-like EIIB component 1 (108 aa).

Residues 1 to 104 (MSKKLIALCA…IIKEIEEMIA (104 aa)) enclose the PTS EIIB type-2 domain. Cys-11 acts as the Phosphocysteine intermediate in catalysis. At Cys-11 the chain carries Phosphocysteine; by EIIA.

It is found in the cytoplasm. The catalysed reaction is D-fructose(out) + N(pros)-phospho-L-histidyl-[protein] = D-fructose 1-phosphate(in) + L-histidyl-[protein]. Functionally, the phosphoenolpyruvate-dependent sugar phosphotransferase system (sugar PTS), a major carbohydrate active transport system, catalyzes the phosphorylation of incoming sugar substrates concomitantly with their translocation across the cell membrane. The enzyme II FryABC PTS system is involved in fructose transport. The sequence is that of PTS system fructose-like EIIB component 1 (fryB) from Escherichia coli O157:H7.